A 103-amino-acid chain; its full sequence is Ubiquitin-related modifier 1 (103 aa).

Position 103 is a 1-thioglycine (Gly103). Gly103 participates in a covalent cross-link: Glycyl lysine isopeptide (Gly-Lys) (interchain with K-? in acceptor proteins).

The protein belongs to the URM1 family. C-terminal thiocarboxylation occurs in 2 steps, it is first acyl-adenylated (-COAMP) via the hesA/moeB/thiF part of UBA4, then thiocarboxylated (-COSH) via the rhodanese domain of UBA4.

The protein localises to the cytoplasm. It functions in the pathway tRNA modification; 5-methoxycarbonylmethyl-2-thiouridine-tRNA biosynthesis. Acts as a sulfur carrier required for 2-thiolation of mcm(5)S(2)U at tRNA wobble positions of cytosolic tRNA(Lys), tRNA(Glu) and tRNA(Gln). Serves as sulfur donor in tRNA 2-thiolation reaction by being thiocarboxylated (-COSH) at its C-terminus by the MOCS3 homolog UBA4. The sulfur is then transferred to tRNA to form 2-thiolation of mcm(5)S(2)U. Prior mcm(5) tRNA modification by the elongator complex is required for 2-thiolation. Also acts as a ubiquitin-like protein (UBL) that is covalently conjugated via an isopeptide bond to lysine residues of target proteins such as AHP1. The thiocarboxylated form serves as substrate for conjugation and oxidative stress specifically induces the formation of UBL-protein conjugates. The sequence is that of Ubiquitin-related modifier 1 from Vanderwaltozyma polyspora (strain ATCC 22028 / DSM 70294 / BCRC 21397 / CBS 2163 / NBRC 10782 / NRRL Y-8283 / UCD 57-17) (Kluyveromyces polysporus).